An 806-amino-acid chain; its full sequence is Lon protease (806 aa).

A Lon N-terminal domain is found at 14-207; the sequence is YPVLPLRDIV…KALGFMEGEI (194 aa). Position 359-366 (359-366) interacts with ATP; sequence GPPGVGKT. The 182-residue stretch at 594–775 folds into the Lon proteolytic domain; the sequence is DDQVGVVTGL…GEVIAHALLR (182 aa). Residues S681 and K724 contribute to the active site. Residues 786–806 form a disordered region; it reads SQPAALPSVDSQDEAGTSIAH.

This sequence belongs to the peptidase S16 family. Homohexamer. Organized in a ring with a central cavity.

It localises to the cytoplasm. The catalysed reaction is Hydrolysis of proteins in presence of ATP.. ATP-dependent serine protease that mediates the selective degradation of mutant and abnormal proteins as well as certain short-lived regulatory proteins. Required for cellular homeostasis and for survival from DNA damage and developmental changes induced by stress. Degrades polypeptides processively to yield small peptide fragments that are 5 to 10 amino acids long. Binds to DNA in a double-stranded, site-specific manner. In R.meliloti it is important for controlling the turnover of a constitutively expressed protein(s) that, when unregulated, disrupts normal nodule formation and normal growth. In Rhizobium meliloti (strain 1021) (Ensifer meliloti), this protein is Lon protease.